The following is a 404-amino-acid chain: Caspase-1 (404 aa).

One can recognise a CARD domain in the interval 1 to 91 (MADKVLKDKR…HLAQTLGLSS (91 aa)). The propeptide occupies 1 to 119 (MADKVLKDKR…SLPAFVENMP (119 aa)). Active-site residues include His-237 and Cys-285. Residues 298–316 (SPKASTDSWTHQPLMLQSD) constitute a propeptide that is removed on maturation. Ser-302 carries the post-translational modification Phosphoserine.

It belongs to the peptidase C14A family. As to quaternary structure, heterotetramer that consists of two anti-parallel arranged heterodimers, each one formed by a 20 kDa (Caspase-1 subunit p20) and a 10 kDa (Caspase-1 subunit p10) subunit. May be a component of the inflammasome, a protein complex which also includes PYCARD, CARD8 and NLRP2 and whose function would be the activation of pro-inflammatory caspases. Component of the AIM2 PANoptosome complex, a multiprotein complex that drives inflammatory cell death (PANoptosis). Both the p10 and p20 subunits interact with MEFV. Interacts with CARD17P/INCA and CARD18. Interacts with SERPINB1; this interaction regulates CASP1 activity. In terms of assembly, heterotetramer that consists of two anti-parallel arranged heterodimers, each one formed by a 20 kDa (Caspase-1 subunit p20) and a 10 kDa (Caspase-1 subunit p10) subunit. Post-translationally, the two subunits are derived from the precursor sequence by an autocatalytic mechanism. Ubiquitinated via 'Lys-11'-linked polyubiquitination. Deubiquitinated by USP8.

Its subcellular location is the cytoplasm. The protein localises to the cell membrane. It carries out the reaction Strict requirement for an Asp residue at position P1 and has a preferred cleavage sequence of Tyr-Val-Ala-Asp-|-.. In terms of biological role, thiol protease involved in a variety of inflammatory processes by proteolytically cleaving other proteins, such as the precursors of the inflammatory cytokines interleukin-1 beta (IL1B) and interleukin 18 (IL18) as well as the pyroptosis inducer Gasdermin-D (GSDMD), into active mature peptides. Plays a key role in cell immunity as an inflammatory response initiator: once activated through formation of an inflammasome complex, it initiates a pro-inflammatory response through the cleavage of the two inflammatory cytokines IL1B and IL18, releasing the mature cytokines which are involved in a variety of inflammatory processes. Cleaves a tetrapeptide after an Asp residue at position P1. Also initiates pyroptosis, a programmed lytic cell death pathway, through cleavage of GSDMD. In contrast to cleavage of interleukin IL1B, recognition and cleavage of GSDMD is not strictly dependent on the consensus cleavage site but depends on an exosite interface on CASP1 that recognizes and binds the Gasdermin-D, C-terminal (GSDMD-CT) part. Cleaves and activates CASP7 in response to bacterial infection, promoting plasma membrane repair. Upon inflammasome activation, during DNA virus infection but not RNA virus challenge, controls antiviral immunity through the cleavage of CGAS, rendering it inactive. In apoptotic cells, cleaves SPHK2 which is released from cells and remains enzymatically active extracellularly. The sequence is that of Caspase-1 (CASP1) from Canis lupus familiaris (Dog).